A 127-amino-acid polypeptide reads, in one-letter code: Glycine cleavage system H protein (127 aa).

The 82-residue stretch at 23–104 (TALVGLTDYA…PYEAWFAKIT (82 aa)) folds into the Lipoyl-binding domain. Residue lysine 64 is modified to N6-lipoyllysine.

Belongs to the GcvH family. In terms of assembly, the glycine cleavage system is composed of four proteins: P, T, L and H. (R)-lipoate is required as a cofactor.

The glycine cleavage system catalyzes the degradation of glycine. The H protein shuttles the methylamine group of glycine from the P protein to the T protein. This is Glycine cleavage system H protein from Lachnoclostridium phytofermentans (strain ATCC 700394 / DSM 18823 / ISDg) (Clostridium phytofermentans).